The following is a 439-amino-acid chain: MMHRVGFNVIGRRSFFTVNARRQVLKSSFMGLKPLQLTALLLAGSAGYLYFMNARSAIHEYVVCPVVRLITPDPENGHKLGIWCFKWGLSPKLYFDKDPESLHVNVFGTTMTNPIGCAAGLDKDAEAIDGIMPTGFGYMEVGSVTPVAQPGNPRPRFFRLPADDAVINRYGFNSSGHDVVYNNLMKRVNKFLNSYFGDKSIDKLSLYKDKLLAVNLGKNKNGDEVKDYLKGVEKFQSLADVLVINVSSPNTPGLRDLQNEAKLTNLLSEIITKRDSQSNKPNALGKQNHKPPVLVKIAPDLTEPELQSIVEAAKKSKVDGIIVSNTTIQRPNTLKTQDETLRNQVGGLSGKPLKPFALKAMKAVSKYAKDSDLVLVGCGGISSGKDAIEFAKAGATFVQLYTSYAYVGPALIARIKDEVAEELKKEGKTWMEIIGEDNK.

A mitochondrion-targeting transit peptide spans 1 to 22; sequence MMHRVGFNVIGRRSFFTVNARR. A helical transmembrane segment spans residues 37 to 53; sequence LTALLLAGSAGYLYFMN. Residues 119 to 123 and serine 143 contribute to the FMN site; that span reads AGLDK. Lysine 123 serves as a coordination point for substrate. 168–172 serves as a coordination point for substrate; it reads NRYGF. FMN is bound by residues asparagine 215 and asparagine 245. A substrate-binding site is contributed by 245 to 250; the sequence is NVSSPN. The active-site Nucleophile is the serine 248. Lysine 296 and serine 324 together coordinate FMN. 325–326 contributes to the substrate binding site; sequence NT. FMN contacts are provided by residues glycine 350, glycine 380, and 401 to 402; that span reads YT.

The protein belongs to the dihydroorotate dehydrogenase family. Type 2 subfamily. It depends on FMN as a cofactor.

The protein resides in the mitochondrion inner membrane. It catalyses the reaction (S)-dihydroorotate + a quinone = orotate + a quinol. It functions in the pathway pyrimidine metabolism; UMP biosynthesis via de novo pathway; orotate from (S)-dihydroorotate (quinone route): step 1/1. Its function is as follows. Catalyzes the conversion of dihydroorotate to orotate with quinone as electron acceptor. The sequence is that of Dihydroorotate dehydrogenase (quinone), mitochondrial (URA9) from Candida glabrata (strain ATCC 2001 / BCRC 20586 / JCM 3761 / NBRC 0622 / NRRL Y-65 / CBS 138) (Yeast).